Here is a 409-residue protein sequence, read N- to C-terminus: Tyrosine--tRNA ligase (409 aa).

Tyrosine 35 is a binding site for L-tyrosine. The 'HIGH' region signature appears at 40–49; the sequence is PTGSSLHVGH. L-tyrosine contacts are provided by tyrosine 168 and glutamine 172. Residues 228–232 carry the 'KMSKS' region motif; that stretch reads KMGKT. Lysine 231 is a binding site for ATP. The 66-residue stretch at 339-404 folds into the S4 RNA-binding domain; that stretch reads IKVTDLFVQV…AGKKRVVRIV (66 aa).

This sequence belongs to the class-I aminoacyl-tRNA synthetase family. TyrS type 1 subfamily. Homodimer.

The protein localises to the cytoplasm. The catalysed reaction is tRNA(Tyr) + L-tyrosine + ATP = L-tyrosyl-tRNA(Tyr) + AMP + diphosphate + H(+). Functionally, catalyzes the attachment of tyrosine to tRNA(Tyr) in a two-step reaction: tyrosine is first activated by ATP to form Tyr-AMP and then transferred to the acceptor end of tRNA(Tyr). In Treponema pallidum (strain Nichols), this protein is Tyrosine--tRNA ligase.